The primary structure comprises 490 residues: ATP synthase subunit beta, chloroplastic (490 aa).

Position 6 is a phosphothreonine (Thr-6). The residue at position 13 (Ser-13) is a Phosphoserine. 172 to 179 (GGAGVGKT) is a binding site for ATP.

The protein belongs to the ATPase alpha/beta chains family. In terms of assembly, F-type ATPases have 2 components, CF(1) - the catalytic core - and CF(0) - the membrane proton channel. CF(1) has five subunits: alpha(3), beta(3), gamma(1), delta(1), epsilon(1). CF(0) has four main subunits: a(1), b(1), b'(1) and c(9-12).

The protein localises to the plastid. The protein resides in the chloroplast thylakoid membrane. The catalysed reaction is ATP + H2O + 4 H(+)(in) = ADP + phosphate + 5 H(+)(out). In terms of biological role, produces ATP from ADP in the presence of a proton gradient across the membrane. The catalytic sites are hosted primarily by the beta subunits. The polypeptide is ATP synthase subunit beta, chloroplastic (Aethionema cordifolium (Lebanon stonecress)).